Reading from the N-terminus, the 75-residue chain is UPF0352 protein ETA_12580 (75 aa).

It belongs to the UPF0352 family.

The chain is UPF0352 protein ETA_12580 from Erwinia tasmaniensis (strain DSM 17950 / CFBP 7177 / CIP 109463 / NCPPB 4357 / Et1/99).